Here is a 432-residue protein sequence, read N- to C-terminus: Putative cyclin-F1-4 (432 aa).

It belongs to the cyclin family. Cyclin F subfamily.

The polypeptide is Putative cyclin-F1-4 (CycF1-4) (Oryza sativa subsp. japonica (Rice)).